A 1172-amino-acid polypeptide reads, in one-letter code: Lysylphosphatidylglycerol biosynthesis bifunctional protein LysX (1172 aa).

Residues 1–34 (MGLHLTVPGLRRDGRGVQSNSHDTSSKTTADISR) form a disordered region. Positions 1 to 663 (MGLHLTVPGL…LLHHDGSAPD (663 aa)) are phosphatidylglycerol lysyltransferase. The segment covering 17–31 (VQSNSHDTSSKTTAD) has biased composition (polar residues). 7 helical membrane-spanning segments follow: residues 80–100 (VPAA…LASV), 122–142 (FPDT…ALTA), 146–166 (IAWL…AAEI), 177–197 (FGEN…VLGY), 214–234 (AVWL…VELF), 272–292 (AIFG…LFLS), and 612–632 (VIPR…LPFS). Positions 664-1172 (VSGLRQVGLT…TLPFPLAKPH (509 aa)) are lysine--tRNA ligase. The OB DNA-binding region spans 726-804 (VSVSGRIMRI…SLIVSGWRLI (79 aa)). Mg(2+) is bound by residues aspartate 1084 and glutamate 1091.

This sequence in the N-terminal section; belongs to the LPG synthetase family. In the C-terminal section; belongs to the class-II aminoacyl-tRNA synthetase family. Requires Mg(2+) as cofactor.

Its subcellular location is the cell membrane. It catalyses the reaction tRNA(Lys) + L-lysine + ATP = L-lysyl-tRNA(Lys) + AMP + diphosphate. It carries out the reaction L-lysyl-tRNA(Lys) + a 1,2-diacyl-sn-glycero-3-phospho-(1'-sn-glycerol) = a 1,2-diacyl-sn-glycero-3-phospho-1'-(3'-O-L-lysyl)-sn-glycerol + tRNA(Lys). Functionally, catalyzes the production of L-lysyl-tRNA(Lys)transfer and the transfer of a lysyl group from L-lysyl-tRNA(Lys) to membrane-bound phosphatidylglycerol (PG), which produces lysylphosphatidylglycerol (LPG), one of the components of the bacterial membrane with a positive net charge. LPG synthesis contributes to the resistance to cationic antimicrobial peptides (CAMPs) and likely protects M.tuberculosis against the CAMPs produced by competiting microorganisms (bacteriocins). In fact, the modification of anionic phosphatidylglycerol with positively charged L-lysine results in repulsion of the peptides. The polypeptide is Lysylphosphatidylglycerol biosynthesis bifunctional protein LysX (lysX) (Mycobacterium bovis (strain ATCC BAA-935 / AF2122/97)).